A 177-amino-acid polypeptide reads, in one-letter code: Large ribosomal subunit protein uL6 (177 aa).

Belongs to the universal ribosomal protein uL6 family. Part of the 50S ribosomal subunit.

Its function is as follows. This protein binds to the 23S rRNA, and is important in its secondary structure. It is located near the subunit interface in the base of the L7/L12 stalk, and near the tRNA binding site of the peptidyltransferase center. The sequence is that of Large ribosomal subunit protein uL6 from Cereibacter sphaeroides (strain ATCC 17025 / ATH 2.4.3) (Rhodobacter sphaeroides).